The following is a 148-amino-acid chain: Large ribosomal subunit protein bL9 (148 aa).

Belongs to the bacterial ribosomal protein bL9 family.

Binds to the 23S rRNA. The protein is Large ribosomal subunit protein bL9 of Lachnoclostridium phytofermentans (strain ATCC 700394 / DSM 18823 / ISDg) (Clostridium phytofermentans).